A 309-amino-acid polypeptide reads, in one-letter code: MNQPLQHITVLLDEAVDALLDGAAQPVAGQWVDATFGRGGHSRRILQRLGPDGALLAFDKDPDAIEEAARITDARFSIRHEGFRHLSELPAGSVQGVLMDLGVSSPQIDNPERGFSFRFEGPLDMRMDTTRGQSVADWLAEADAQQIAEVIRDYGEERFAGPIAKAIVARRESQGPLRNTAELAELVAGAVRTREAGQNPATRTFQALRIFINAELEELEQALEASLRVLAPGGRLVVISFHSLEDRIVKQFIAKHSKEVYDRRAPFAVPTPMRLEALGRIKPSEAEVAANARSRSAVMRVARRTGVPA.

Residues 39–41 (GGH), Asp-59, Phe-83, Asp-100, and Gln-107 contribute to the S-adenosyl-L-methionine site.

Belongs to the methyltransferase superfamily. RsmH family.

The protein localises to the cytoplasm. The catalysed reaction is cytidine(1402) in 16S rRNA + S-adenosyl-L-methionine = N(4)-methylcytidine(1402) in 16S rRNA + S-adenosyl-L-homocysteine + H(+). Specifically methylates the N4 position of cytidine in position 1402 (C1402) of 16S rRNA. This Delftia acidovorans (strain DSM 14801 / SPH-1) protein is Ribosomal RNA small subunit methyltransferase H.